The following is an 870-amino-acid chain: Increased rDNA silencing protein 4 (870 aa).

Residues 1-11 show a composition bias toward basic residues; the sequence is MHMRLNKRRRN. Disordered regions lie at residues 1-25, 38-57, 62-92, 147-260, 275-315, 516-579, and 717-738; these read MHMRLNKRRRNHVQEQMSELPQDAK, RHADNANSTPPSPVGLDSAG, QADTAQRVHKVGTPSGTSSSHNSGNEGMHKV, IRTT…PSNM, GRKN…PSPI, YLGN…SSSY, and DDSASNLNSNASTNVGGVLSDG. Over residues 75-86 the composition is skewed to polar residues; that stretch reads PSGTSSSHNSGN. Residues 155-166 show a composition bias toward basic and acidic residues; it reads QDKKRRDIENAH. Residues 167 to 181 are compositionally biased toward low complexity; sequence HAASAAAVTSSNLAV. Polar residues predominate over residues 184–208; that stretch reads PPSQYIPSVPTLNVTSPQMRNSSQN. Positions 209–227 are enriched in basic and acidic residues; that stretch reads IDRRSKSNEEAHNGHEKMM. The segment covering 228-237 has biased composition (low complexity); that stretch reads NSRSNSINSS. A compositionally biased stretch (polar residues) spans 238–259; the sequence is TIKGSVSEPNTVTPLRQNSPSN. The span at 299–310 shows a compositional bias: basic residues; it reads RPMRTPSGRRVR. The span at 532–548 shows a compositional bias: acidic residues; sequence IDDDDDDDDYDSAYEDL. Residues 549–566 show a composition bias toward basic and acidic residues; it reads DYSRDDSEAMYKGDRESS. Composition is skewed to low complexity over residues 567–579 and 720–730; these read NPRSNSLLQSSSY and ASNLNSNASTN. The EH domain maps to 739-828; it reads DNEEDDVTRF…PKIWDSVDRW (90 aa).

The protein belongs to the IRS4 family.

Positive regulator of phosphatidylinositol 4,5-bisphosphate turnover and negatively regulates signaling through the cell integrity pathway. Involved in rDNA silencing. The sequence is that of Increased rDNA silencing protein 4 (IRS4) from Candida glabrata (strain ATCC 2001 / BCRC 20586 / JCM 3761 / NBRC 0622 / NRRL Y-65 / CBS 138) (Yeast).